A 121-amino-acid chain; its full sequence is Small ribosomal subunit protein bS16 (121 aa).

The tract at residues 88–121 (GKAKLEKEKKAKAKTKEEENEGSKTESGSNEAES) is disordered. Residues 90–111 (AKLEKEKKAKAKTKEEENEGSK) show a composition bias toward basic and acidic residues. Residues 112-121 (TESGSNEAES) show a composition bias toward polar residues.

The protein belongs to the bacterial ribosomal protein bS16 family.

The protein is Small ribosomal subunit protein bS16 of Prochlorococcus marinus (strain MIT 9215).